The chain runs to 183 residues: Ribose 1,5-bisphosphate phosphokinase PhnN (183 aa).

Position 6-13 (6-13 (GPSGAGKD)) interacts with ATP.

It belongs to the ribose 1,5-bisphosphokinase family.

The enzyme catalyses alpha-D-ribose 1,5-bisphosphate + ATP = 5-phospho-alpha-D-ribose 1-diphosphate + ADP. The protein operates within metabolic intermediate biosynthesis; 5-phospho-alpha-D-ribose 1-diphosphate biosynthesis; 5-phospho-alpha-D-ribose 1-diphosphate from D-ribose 5-phosphate (route II): step 3/3. Functionally, catalyzes the phosphorylation of ribose 1,5-bisphosphate to 5-phospho-D-ribosyl alpha-1-diphosphate (PRPP). The protein is Ribose 1,5-bisphosphate phosphokinase PhnN of Agrobacterium fabrum (strain C58 / ATCC 33970) (Agrobacterium tumefaciens (strain C58)).